Here is a 396-residue protein sequence, read N- to C-terminus: S-adenosylmethionine synthase (396 aa).

Residue His-16 participates in ATP binding. Asp-18 is a Mg(2+) binding site. Glu-44 contributes to the K(+) binding site. Residues Glu-57 and Gln-100 each coordinate L-methionine. The tract at residues 100–110 (QSPDINQGVDR) is flexible loop. Residues 165–167 (DAK), Asp-240, 246–247 (RK), Ala-263, and Lys-267 contribute to the ATP site. An L-methionine-binding site is contributed by Asp-240. Lys-271 serves as a coordination point for L-methionine.

Belongs to the AdoMet synthase family. Homotetramer; dimer of dimers. The cofactor is Mg(2+). Requires K(+) as cofactor.

It is found in the cytoplasm. The enzyme catalyses L-methionine + ATP + H2O = S-adenosyl-L-methionine + phosphate + diphosphate. It functions in the pathway amino-acid biosynthesis; S-adenosyl-L-methionine biosynthesis; S-adenosyl-L-methionine from L-methionine: step 1/1. Functionally, catalyzes the formation of S-adenosylmethionine (AdoMet) from methionine and ATP. The overall synthetic reaction is composed of two sequential steps, AdoMet formation and the subsequent tripolyphosphate hydrolysis which occurs prior to release of AdoMet from the enzyme. The chain is S-adenosylmethionine synthase from Pseudomonas fluorescens (strain SBW25).